A 529-amino-acid polypeptide reads, in one-letter code: Chromosomal replication initiator protein DnaA (529 aa).

Residues 1–72 (MQDFWHAASA…SLACDYWEAT (72 aa)) form a domain I, interacts with DnaA modulators region. Residues 72–192 (TVDVQFVLDP…HVDDSVHERS (121 aa)) are domain II. The domain III, AAA+ region stretch occupies residues 193–409 (RLNQILTFDN…GALRKILAYS (217 aa)). Residues G237, G239, K240, and T241 each contribute to the ATP site. A domain IV, binds dsDNA region spans residues 410–529 (NFHGKEITIE…LHVLEQTLKG (120 aa)).

This sequence belongs to the DnaA family. In terms of assembly, oligomerizes as a right-handed, spiral filament on DNA at oriC.

It localises to the cytoplasm. Its function is as follows. Plays an essential role in the initiation and regulation of chromosomal replication. ATP-DnaA binds to the origin of replication (oriC) to initiate formation of the DNA replication initiation complex once per cell cycle. Binds the DnaA box (a 9 base pair repeat at the origin) and separates the double-stranded (ds)DNA. Forms a right-handed helical filament on oriC DNA; dsDNA binds to the exterior of the filament while single-stranded (ss)DNA is stabiized in the filament's interior. The ATP-DnaA-oriC complex binds and stabilizes one strand of the AT-rich DNA unwinding element (DUE), permitting loading of DNA polymerase. After initiation quickly degrades to an ADP-DnaA complex that is not apt for DNA replication. Binds acidic phospholipids. This chain is Chromosomal replication initiator protein DnaA, found in Ralstonia pickettii (strain 12J).